Reading from the N-terminus, the 192-residue chain is MGVPERPTLLLLLSLLLLPLGLPVLCAPPRLICDGRVLERYILEAREAENVTMGCAEGPRLSENITVPDTKVNFNAWKRMEVQEQAVEVWQGLSLLSEAILRGQALLANSSQPSGMLQLHIDKAISGLRSLTSLLRVLGAQKESISPPDATPPAPLRTLMVENFCKLFRVYSNFLRGKLKLYTGEACRRGDR.

Residues 1-26 form the signal peptide; sequence MGVPERPTLLLLLSLLLLPLGLPVLC. Cysteine 33 and cysteine 187 are joined by a disulfide. N-linked (GlcNAc...) asparagine glycosylation is found at asparagine 50, asparagine 64, and asparagine 109.

It belongs to the EPO/TPO family. In terms of tissue distribution, produced by kidney or liver of adult mammals and by liver of fetal or neonatal mammals.

The protein localises to the secreted. Functionally, hormone involved in the regulation of erythrocyte proliferation and differentiation and the maintenance of a physiological level of circulating erythrocyte mass. Binds to EPOR leading to EPOR dimerization and JAK2 activation thereby activating specific downstream effectors, including STAT1 and STAT3. The polypeptide is Erythropoietin (EPO) (Alexandromys oeconomus (Tundra vole)).